Consider the following 508-residue polypeptide: Histidine ammonia-lyase (508 aa).

The segment at residues 139–141 is a cross-link (5-imidazolinone (Ala-Gly)); the sequence is ASG. Residue Ser140 is modified to 2,3-didehydroalanine (Ser).

It belongs to the PAL/histidase family. Contains an active site 4-methylidene-imidazol-5-one (MIO), which is formed autocatalytically by cyclization and dehydration of residues Ala-Ser-Gly.

It localises to the cytoplasm. The catalysed reaction is L-histidine = trans-urocanate + NH4(+). Its pathway is amino-acid degradation; L-histidine degradation into L-glutamate; N-formimidoyl-L-glutamate from L-histidine: step 1/3. The polypeptide is Histidine ammonia-lyase (Acidiphilium cryptum (strain JF-5)).